The primary structure comprises 93 residues: UPF0367 protein ssl1972 (93 aa).

Belongs to the UPF0367 family.

The protein is UPF0367 protein ssl1972 of Synechocystis sp. (strain ATCC 27184 / PCC 6803 / Kazusa).